The primary structure comprises 424 residues: Dihydrolipoyllysine-residue succinyltransferase component of 2-oxoglutarate dehydrogenase complex (424 aa).

The Lipoyl-binding domain occupies M1 to G76. The residue at position 42 (K42) is an N6-lipoyllysine. Disordered regions lie at residues G76–R138 and V155–T204. The segment covering E91–S105 has biased composition (basic and acidic residues). Residues D122–P131 are compositionally biased toward polar residues. Residues N128–Q164 form the Peripheral subunit-binding (PSBD) domain. Positions Q162–A176 are enriched in low complexity. Active-site residues include H395 and D399.

It belongs to the 2-oxoacid dehydrogenase family. In terms of assembly, forms a 24-polypeptide structural core with octahedral symmetry. Part of the 2-oxoglutarate dehydrogenase (OGDH) complex composed of E1 (2-oxoglutarate dehydrogenase), E2 (dihydrolipoamide succinyltransferase) and E3 (dihydrolipoamide dehydrogenase); the complex contains multiple copies of the three enzymatic components (E1, E2 and E3). Requires (R)-lipoate as cofactor.

The enzyme catalyses N(6)-[(R)-dihydrolipoyl]-L-lysyl-[protein] + succinyl-CoA = N(6)-[(R)-S(8)-succinyldihydrolipoyl]-L-lysyl-[protein] + CoA. It functions in the pathway amino-acid degradation; L-lysine degradation via saccharopine pathway; glutaryl-CoA from L-lysine: step 6/6. E2 component of the 2-oxoglutarate dehydrogenase (OGDH) complex which catalyzes the second step in the conversion of 2-oxoglutarate to succinyl-CoA and CO(2). The polypeptide is Dihydrolipoyllysine-residue succinyltransferase component of 2-oxoglutarate dehydrogenase complex (odhB) (Staphylococcus saprophyticus subsp. saprophyticus (strain ATCC 15305 / DSM 20229 / NCIMB 8711 / NCTC 7292 / S-41)).